Consider the following 214-residue polypeptide: Small ribosomal subunit protein uS5 (214 aa).

In terms of domain architecture, S5 DRBM spans 54–117 (MKYEVIDIGM…RDAKMHVIPV (64 aa)).

The protein belongs to the universal ribosomal protein uS5 family. Part of the 30S ribosomal subunit. Contacts protein S4.

In terms of biological role, with S4 and S12 plays an important role in translational accuracy. This Metallosphaera sedula (strain ATCC 51363 / DSM 5348 / JCM 9185 / NBRC 15509 / TH2) protein is Small ribosomal subunit protein uS5.